Reading from the N-terminus, the 724-residue chain is Catalase-peroxidase (724 aa).

Residues 98–226 (WHSAGSYRIA…LAAVMMGLIY (129 aa)) constitute a cross-link (tryptophyl-tyrosyl-methioninium (Trp-Tyr) (with M-252)). Catalysis depends on His-99, which acts as the Proton acceptor. Positions 226-252 (YVNPEGVDGHPDPQKTANDVRVTFARM) form a cross-link, tryptophyl-tyrosyl-methioninium (Tyr-Met) (with W-98). His-267 contributes to the heme b binding site.

It belongs to the peroxidase family. Peroxidase/catalase subfamily. As to quaternary structure, homodimer or homotetramer. Requires heme b as cofactor. Formation of the three residue Trp-Tyr-Met cross-link is important for the catalase, but not the peroxidase activity of the enzyme.

The enzyme catalyses H2O2 + AH2 = A + 2 H2O. It carries out the reaction 2 H2O2 = O2 + 2 H2O. Bifunctional enzyme with both catalase and broad-spectrum peroxidase activity. The polypeptide is Catalase-peroxidase (Edwardsiella tarda).